We begin with the raw amino-acid sequence, 492 residues long: Differentially expressed in FDCP 8 homolog (492 aa).

Gly residues predominate over residues 38-51; that stretch reads GLGGSGSTGSGSEA. The segment at 38-62 is disordered; it reads GLGGSGSTGSGSEAGGSEESGPQGA. 2 Phorbol-ester/DAG-type zinc fingers span residues 161–214 and 400–453; these read PHHG…KRVC and DHIR…NMIC. Positions 468–492 are disordered; it reads RMKSTEDDDDDDDGVATDDDVTAAE. A compositionally biased stretch (acidic residues) spans 473-492; that stretch reads EDDDDDDDGVATDDDVTAAE.

The protein belongs to the DEF8 family.

The protein is Differentially expressed in FDCP 8 homolog of Drosophila melanogaster (Fruit fly).